The primary structure comprises 246 residues: Sensory transduction protein LytT (246 aa).

The Response regulatory domain maps to 3-117; sequence KVLVVDDEML…RIVQTLKKYK (115 aa). The residue at position 54 (aspartate 54) is a 4-aspartylphosphate. The HTH LytTR-type domain occupies 142 to 246; that stretch reads LALPIEESIV…AKELKKLLRI (105 aa).

Post-translationally, phosphorylated by LytS.

The protein localises to the cytoplasm. Its function is as follows. Member of the two-component regulatory system LytS/LytT that probably regulates genes involved in cell wall metabolism. The protein is Sensory transduction protein LytT (lytT) of Bacillus anthracis.